Reading from the N-terminus, the 314-residue chain is MDVIKISPRGYCYGVVDAMVIAKNASLDKTLPRPIYILGMIVHNKHVTDAFEEDGIYTLDGTNRLEILKQVEKGTVIFTAHGVSPEVRKAAEEKGLVTIDATCPDVTKTHDLIRKVKAEGYHVIYIGKKGHPEPEGAVGVAPEIVHLVETEEDVRNLDIQAEKLIVTNQTTMSQWDVHDIMESVKEKYPYVEYHQEICLATQVRQEAVSEQAKKADLTIVVGDPKSNNSNRLAQVSEEIAGTKAYRIGDISELKLEWLKDVNTVAVTAGASTPTPITKEVIRFLEQFDHNDESTWQLEHSVPLKKILPKVKIKN.

A [4Fe-4S] cluster-binding site is contributed by Cys-12. Positions 43 and 81 each coordinate (2E)-4-hydroxy-3-methylbut-2-enyl diphosphate. Residues His-43 and His-81 each contribute to the dimethylallyl diphosphate site. Isopentenyl diphosphate is bound by residues His-43 and His-81. Cys-103 provides a ligand contact to [4Fe-4S] cluster. His-131 contacts (2E)-4-hydroxy-3-methylbut-2-enyl diphosphate. His-131 provides a ligand contact to dimethylallyl diphosphate. His-131 lines the isopentenyl diphosphate pocket. Glu-133 functions as the Proton donor in the catalytic mechanism. Thr-170 lines the (2E)-4-hydroxy-3-methylbut-2-enyl diphosphate pocket. Cys-198 contacts [4Fe-4S] cluster. Residues Ser-226, Asn-228, and Ser-271 each coordinate (2E)-4-hydroxy-3-methylbut-2-enyl diphosphate. 3 residues coordinate dimethylallyl diphosphate: Ser-226, Asn-228, and Ser-271. 3 residues coordinate isopentenyl diphosphate: Ser-226, Asn-228, and Ser-271.

This sequence belongs to the IspH family. [4Fe-4S] cluster is required as a cofactor.

The catalysed reaction is isopentenyl diphosphate + 2 oxidized [2Fe-2S]-[ferredoxin] + H2O = (2E)-4-hydroxy-3-methylbut-2-enyl diphosphate + 2 reduced [2Fe-2S]-[ferredoxin] + 2 H(+). It catalyses the reaction dimethylallyl diphosphate + 2 oxidized [2Fe-2S]-[ferredoxin] + H2O = (2E)-4-hydroxy-3-methylbut-2-enyl diphosphate + 2 reduced [2Fe-2S]-[ferredoxin] + 2 H(+). The protein operates within isoprenoid biosynthesis; dimethylallyl diphosphate biosynthesis; dimethylallyl diphosphate from (2E)-4-hydroxy-3-methylbutenyl diphosphate: step 1/1. Its pathway is isoprenoid biosynthesis; isopentenyl diphosphate biosynthesis via DXP pathway; isopentenyl diphosphate from 1-deoxy-D-xylulose 5-phosphate: step 6/6. Catalyzes the conversion of 1-hydroxy-2-methyl-2-(E)-butenyl 4-diphosphate (HMBPP) into a mixture of isopentenyl diphosphate (IPP) and dimethylallyl diphosphate (DMAPP). Acts in the terminal step of the DOXP/MEP pathway for isoprenoid precursor biosynthesis. This is 4-hydroxy-3-methylbut-2-enyl diphosphate reductase from Bacillus velezensis (strain DSM 23117 / BGSC 10A6 / LMG 26770 / FZB42) (Bacillus amyloliquefaciens subsp. plantarum).